The following is a 370-amino-acid chain: Lysophosphatidic acid receptor 4 (370 aa).

The Extracellular portion of the chain corresponds to 1–43 (MGDRRFIDFQFQDSNSSLRPRLGNATANNTCIVDDSFKYNLNG). N-linked (GlcNAc...) asparagine glycans are attached at residues asparagine 15, asparagine 24, and asparagine 28. Residues 44-64 (AVYSVVFILGLITNSVSLFVF) form a helical membrane-spanning segment. The Cytoplasmic segment spans residues 65–73 (CFRMKMRSE). A helical transmembrane segment spans residues 74-94 (TAIFITNLAVSDLLFVCTLPF). At 95 to 112 (KIFYNFNRHWPFGDTLCK) the chain is on the extracellular side. Cysteine 111 and cysteine 188 are joined by a disulfide. The helical transmembrane segment at 113–133 (ISGTAFLTNIYGSMLFLTCIS) threads the bilayer. Topologically, residues 134-155 (VDRFLAIVYPFRSRTIRTRRNS) are cytoplasmic. A helical membrane pass occupies residues 156–176 (AIVCAGVWILVLSGGISASLF). The Extracellular segment spans residues 177–203 (STTNVNNATTTCFEGFSKRVWKTYLSK). N-linked (GlcNAc...) asparagine glycosylation occurs at asparagine 183. The chain crosses the membrane as a helical span at residues 204–224 (ITIFIEVVGFIIPLILNVSCS). Residues 225-254 (SVVLRTLRKPATLSQIGTNKKKVLKMITVH) are Cytoplasmic-facing. The helical transmembrane segment at 255–275 (MAVFVVCFVPYNSVLFLYALV) threads the bilayer. Residues 276-294 (RSQAITNCFLERFAKIMYP) lie on the Extracellular side of the membrane. The chain crosses the membrane as a helical span at residues 295 to 315 (ITLCLATLNCCFDPFIYYFTL). Residues 316-370 (ESFQKSFYINAHIRMESLFKTETPLTTKPSLPAIQEEVSDQTTNNGGELMLESTF) lie on the Cytoplasmic side of the membrane.

The protein belongs to the G-protein coupled receptor 1 family. In terms of tissue distribution, high expression in ovary. Not detected in the brain regions thalamus, putamen, caudate, frontal cortex, pons, hypothalamus and hippocampus.

The protein localises to the cell membrane. In terms of biological role, receptor for lysophosphatidic acid (LPA), a mediator of diverse cellular activities. Transduces a signal by increasing the intracellular calcium ions and by stimulating adenylyl cyclase activity. The rank order of potency for agonists of this receptor is 1-oleoyl- &gt; 1-stearoyl- &gt; 1-palmitoyl- &gt; 1-myristoyl- &gt; 1-alkyl- &gt; 1-alkenyl-LPA. The protein is Lysophosphatidic acid receptor 4 (LPAR4) of Homo sapiens (Human).